The chain runs to 123 residues: Con-ikot-ikot (123 aa).

The first 18 residues, 1 to 18 (MAMNMSMTLCMFVMVVVA), serve as a signal peptide directing secretion. Residues 19 to 37 (ATVIDSTQLQEPDLSRMRR) constitute a propeptide that is removed on maturation. 5 disulfides stabilise this stretch: Cys-49–Cys-80, Cys-50–Cys-89, Cys-57–Cys-72, Cys-90–Cys-118, and Cys-96–Cys-113.

As to quaternary structure, homodimer; disulfide-linked. As to expression, expressed by the venom duct.

The protein localises to the secreted. Its function is as follows. Potently and selectively blocks the desensitization of ionotropic glutamate AMPA receptors (GRIA1, GRIA2, GRIA3 and GRIA4). Binds to a different site than does the drug cyclothiazide. The toxin acts like a straitjacket on the 'gating ring' of the ligand-binding domain (LBD) of the receptor. It does so by restraining the domains via both intra- and interdimer cross-links such that agonist-induced closure of the LBD 'clamshells' is transduced into an irislike expansion of the gating ring. Compared to other desensitization blockers, it is a poor stabilizer of the open channel because toxin-bound AMPA receptors undergo frequent brief closures. In vitro, application of the toxin to hippocampal slices causes a large and rapid increase in resting AMPA receptor-mediated current leading to neuronal death. This Conus striatus (Striated cone) protein is Con-ikot-ikot.